The sequence spans 310 residues: Isoaspartyl peptidase/L-asparaginase (310 aa).

The active-site Nucleophile is T167. Residues 195–198 (RVGD) and 218–221 (TGHG) contribute to the substrate site.

The protein belongs to the Ntn-hydrolase family. Heterodimer of an alpha and beta chain produced by autocleavage. Post-translationally, cleaved into an alpha and beta chain by autocatalysis; this activates the enzyme. The N-terminal residue of the beta subunit is responsible for the nucleophile hydrolase activity.

The protein localises to the cytoplasm. The enzyme catalyses L-asparagine + H2O = L-aspartate + NH4(+). It catalyses the reaction Cleavage of a beta-linked Asp residue from the N-terminus of a polypeptide.. Has both L-asparaginase and beta-aspartyl peptidase activity. Does not have aspartylglucosaminidase activity and is inactive toward GlcNAc-L-Asn. Likewise, has no activity toward glutamine. This is Isoaspartyl peptidase/L-asparaginase (asrgl1) from Danio rerio (Zebrafish).